An 865-amino-acid chain; its full sequence is Probable beta-glucosidase J (865 aa).

Aspartate 233 is an active-site residue. N-linked (GlcNAc...) asparagine glycans are attached at residues asparagine 330, asparagine 447, asparagine 503, and asparagine 764. The region spanning 411–579 (TGQPGYTFRV…DTDTAIQQAV (169 aa)) is the PA14 domain.

The protein belongs to the glycosyl hydrolase 3 family.

The protein localises to the secreted. The enzyme catalyses Hydrolysis of terminal, non-reducing beta-D-glucosyl residues with release of beta-D-glucose.. It functions in the pathway glycan metabolism; cellulose degradation. Functionally, beta-glucosidases are one of a number of cellulolytic enzymes involved in the degradation of cellulosic biomass. Catalyzes the last step releasing glucose from the inhibitory cellobiose. This Aspergillus fumigatus (strain CBS 144.89 / FGSC A1163 / CEA10) (Neosartorya fumigata) protein is Probable beta-glucosidase J (bglJ).